The following is a 113-amino-acid chain: Putative membrane protein insertion efficiency factor (113 aa).

The protein belongs to the UPF0161 family.

It localises to the cell inner membrane. Its function is as follows. Could be involved in insertion of integral membrane proteins into the membrane. The chain is Putative membrane protein insertion efficiency factor from Campylobacter jejuni subsp. jejuni serotype O:2 (strain ATCC 700819 / NCTC 11168).